Reading from the N-terminus, the 283-residue chain is NAD kinase (283 aa).

The active-site Proton acceptor is the Asp-66. NAD(+)-binding positions include 66 to 67, 134 to 135, Arg-145, Arg-163, Asp-165, and 176 to 181; these read DG, ND, and TAYSMS.

Belongs to the NAD kinase family. A divalent metal cation serves as cofactor.

Its subcellular location is the cytoplasm. The catalysed reaction is NAD(+) + ATP = ADP + NADP(+) + H(+). Functionally, involved in the regulation of the intracellular balance of NAD and NADP, and is a key enzyme in the biosynthesis of NADP. Catalyzes specifically the phosphorylation on 2'-hydroxyl of the adenosine moiety of NAD to yield NADP. The sequence is that of NAD kinase from Chlorobaculum tepidum (strain ATCC 49652 / DSM 12025 / NBRC 103806 / TLS) (Chlorobium tepidum).